The sequence spans 285 residues: Golgi phosphoprotein 3-like (285 aa).

A disordered region spans residues 1 to 43 (MTTLTHRTRRTEVSKSSEKKIESEEDTNQERSPDNEDPGDSKD). Residues 10-43 (RTEVSKSSEKKIESEEDTNQERSPDNEDPGDSKD) show a composition bias toward basic and acidic residues. Residues Trp-67 and Arg-76 each contribute to the a 1,2-diacyl-sn-glycero-3-phospho-(1D-myo-inositol 4-phosphate) site. Ser-112 is modified (phosphoserine). The a 1,2-diacyl-sn-glycero-3-phospho-(1D-myo-inositol 4-phosphate) site is built by Arg-157 and Arg-160. The interval 176-187 (EKQNFLLFDMTT) is beta-hairpin required for oligomerization.

The protein belongs to the GOLPH3/VPS74 family. As to quaternary structure, homooligomer. Does not interact MYO18; differs from GOLPH3 by its inability to interact with MYO18. May interact with ARF1. Expressed in a subset of tissues tested with higher expression in salivary gland, small intestine and skin (at protein level).

Its subcellular location is the golgi apparatus. It is found in the golgi stack membrane. The protein resides in the trans-Golgi network membrane. Its function is as follows. Phosphatidylinositol-4-phosphate-binding protein that may antagonize the action of GOLPH3 which is required for the process of vesicle budding at the Golgi and anterograde transport to the plasma membrane. The chain is Golgi phosphoprotein 3-like (Golph3l) from Mus musculus (Mouse).